We begin with the raw amino-acid sequence, 71 residues long: Large ribosomal subunit protein bL31 (71 aa).

Residues Cys16, Cys18, Cys36, and Cys39 each contribute to the Zn(2+) site.

This sequence belongs to the bacterial ribosomal protein bL31 family. Type A subfamily. As to quaternary structure, part of the 50S ribosomal subunit. Zn(2+) serves as cofactor.

Its function is as follows. Binds the 23S rRNA. In Syntrophus aciditrophicus (strain SB), this protein is Large ribosomal subunit protein bL31.